Here is a 231-residue protein sequence, read N- to C-terminus: Putative N-acetylmannosamine-6-phosphate 2-epimerase (231 aa).

The protein belongs to the NanE family.

It carries out the reaction an N-acyl-D-glucosamine 6-phosphate = an N-acyl-D-mannosamine 6-phosphate. The protein operates within amino-sugar metabolism; N-acetylneuraminate degradation; D-fructose 6-phosphate from N-acetylneuraminate: step 3/5. Functionally, converts N-acetylmannosamine-6-phosphate (ManNAc-6-P) to N-acetylglucosamine-6-phosphate (GlcNAc-6-P). The protein is Putative N-acetylmannosamine-6-phosphate 2-epimerase of Listeria monocytogenes serotype 4b (strain CLIP80459).